We begin with the raw amino-acid sequence, 560 residues long: Vesicular glutamate transporter 1 (560 aa).

Topologically, residues 1-63 are cytoplasmic; it reads MEFRQEEFRK…CTCFGLPRRY (63 aa). The helical transmembrane segment at 64-84 threads the bilayer; that stretch reads IIAIMSGLGFCISFGIRCNLG. Residues 85 to 116 lie on the Extracellular side of the membrane; it reads VAIVSMVNNSTTHRGGHVVMQKAQFNWDPETV. Residues 117 to 137 traverse the membrane as a helical segment; that stretch reads GLIHGSFFWGYIVTQIPGGFI. Topologically, residues 138 to 140 are cytoplasmic; it reads CQK. A helical transmembrane segment spans residues 141 to 161; that stretch reads FAANRVFGFAIVATSTLNMLI. At 162-169 the chain is on the extracellular side; sequence PSAARVHY. The chain crosses the membrane as a helical span at residues 170-190; sequence GCVIFVRILQGLVEGVTYPAC. Over 191 to 208 the chain is Cytoplasmic; that stretch reads HGIWSKWAPPLERSRLAT. Residues 209–229 traverse the membrane as a helical segment; the sequence is TAFCGSYAGAVVAMPLAGVLV. Topologically, residues 230–236 are extracellular; the sequence is QYSGWSS. The helical transmembrane segment at 237-257 threads the bilayer; it reads VFYVYGSFGIFWYLFWLLVSY. Over 258–302 the chain is Cytoplasmic; that stretch reads ESPALHPSISEEERKYIEDAIGESAKLMNPVTKFNTPWRRFFTSM. The chain crosses the membrane as a helical span at residues 303-323; sequence PVYAIIVANFCRSWTFYLLLI. The Extracellular segment spans residues 324 to 341; it reads SQPAYFEEVFGFEISKVG. The chain crosses the membrane as a helical span at residues 342-362; it reads LVSALPHLVMTIIVPIGGQIA. The Cytoplasmic portion of the chain corresponds to 363-378; sequence DFLRSRRIMSTTNVRK. The helical transmembrane segment at 379–399 threads the bilayer; it reads LMNCGGFGMEATLLLVVGYSH. Topologically, residues 400-401 are extracellular; it reads SK. The chain crosses the membrane as a helical span at residues 402-422; that stretch reads GVAISFLVLAVGFSGFAISGF. The Cytoplasmic portion of the chain corresponds to 423-435; the sequence is NVNHLDIAPRYAS. A helical transmembrane segment spans residues 436–456; sequence ILMGISNGVGTLSGMVCPIIV. Topologically, residues 457 to 469 are extracellular; sequence GAMTKHKTREEWQ. A helical membrane pass occupies residues 470–490; the sequence is YVFLIASLVHYGGVIFYGVFA. Over 491–560 the chain is Cytoplasmic; it reads SGEKQPWAEP…PRPPPPVRDY (70 aa). The interval 497 to 560 is disordered; that stretch reads WAEPEEMSEE…PRPPPPVRDY (64 aa). Position 504 is a phosphoserine (S504). A compositionally biased stretch (acidic residues) spans 520 to 529; sequence DESEMEDEAE. Composition is skewed to pro residues over residues 531-540 and 550-560; these read PGAPPAPPPS and PPRPPPPVRDY.

Belongs to the major facilitator superfamily. Sodium/anion cotransporter family. VGLUT subfamily. In terms of assembly, interacts with SHANK3.

It localises to the cytoplasmic vesicle. The protein localises to the secretory vesicle. It is found in the synaptic vesicle membrane. The protein resides in the cell membrane. Its subcellular location is the synapse. It localises to the synaptosome. It catalyses the reaction L-glutamate(out) = L-glutamate(in). The catalysed reaction is chloride(in) = chloride(out). It carries out the reaction 3 Na(+)(out) + phosphate(out) = 3 Na(+)(in) + phosphate(in). The enzyme catalyses phosphate(in) = phosphate(out). It catalyses the reaction K(+)(in) + H(+)(out) = K(+)(out) + H(+)(in). Its activity is regulated as follows. Chloride channel activity is allosterically activated by lumenal H(+) and Cl(-) leading to synaptic vesicles acidification. The L-glutamate transport activity is allosterically activated by lumenal H(+) and Cl(-). The allosteric activation by H(+) efficiently prevents non-vesicular efflux across the plasma membrane, thereby restricting L-glutamate transport activity to acidic membranes such as synaptic vesicles. In terms of biological role, multifunctional transporter that transports L-glutamate as well as multiple ions such as chloride, proton, potassium, sodium and phosphate. At the synaptic vesicle membrane, mainly functions as an uniporter which transports preferentially L-glutamate but also phosphate from the cytoplasm into synaptic vesicles at presynaptic nerve terminals of excitatory neural cells. The L-glutamate or phosphate uniporter activity is electrogenic and is driven by the proton electrochemical gradient, mainly by the electrical gradient established by the vacuolar H(+)-ATPase across the synaptic vesicle membrane. In addition, functions as a chloride channel that allows a chloride permeation through the synaptic vesicle membrane that affects the proton electrochemical gradient and promotes synaptic vesicles acidification. Moreover, may function as a K(+)/H(+) antiport allowing to maintain the electrical gradient and to decrease chemical gradient and therefore sustain vesicular glutamate uptake. The vesicular K(+)/H(+) antiport activity is electroneutral. At the plasma membrane, following exocytosis, functions as a symporter of Na(+) and phosphate from the extracellular space to the cytoplasm allowing synaptic phosphate homeostasis regulation. The symporter activity is driven by an inside negative membrane potential and is electrogenic. Is necessary for synaptic signaling of visual-evoked responses from photoreceptors. In Bos taurus (Bovine), this protein is Vesicular glutamate transporter 1.